The following is a 499-amino-acid chain: MEKYIMSIDQGTTSSRAILFDKEGDIKGVAQREFKQYFPKSGWVEHDANEIWTSVLAVMTEVLNENEINADQIEGIGITNQRETTVIWDKNTGRPIYHAIVWQSRQTQSICHELKEQGHEETFRNKTGLLLDPYFAGTKVKWILDNVDGAREKAENGDLLFGTIDTWLVWKLSGGEAHITDYSNASRTLMYNIYDLQWDDELLDLLNVPKQLLPEVKESSEIYAHTKDYHFFGQEVPISGIAGDQQAALFGQACFERGDVKNTYGTGGFMLMNTGEEPVKSESGLLTTIAYGLDGKVNYALEGSIFVSGSAIQWLRDGLRIINSAPQSENYATRVDSTDNVYFVPAFVGLGTPYWDSEARGAIFGLSRGTEKEHFIRATLESLCYQTRDVMEAMSKDSKIEVNNLRVDGGAVKNNFIMQFQADIVNTAVERPEIQETTALGAAYLAGLAVGFWDSKDEIANRWQLETEFTPQMSEEDRTKLYKGWKKAVEATQVFKLED.

Thr12 contacts ADP. Residues Thr12, Thr13, and Ser14 each coordinate ATP. Thr12 serves as a coordination point for sn-glycerol 3-phosphate. Arg16 is an ADP binding site. Sn-glycerol 3-phosphate contacts are provided by Arg82, Glu83, and Tyr134. Glycerol contacts are provided by Arg82, Glu83, and Tyr134. Phosphohistidine; by HPr is present on His230. Asp244 contacts sn-glycerol 3-phosphate. Glycerol is bound by residues Asp244 and Gln245. ADP contacts are provided by Thr266 and Gly309. Residues Thr266, Gly309, Gln313, and Gly410 each contribute to the ATP site. Gly410 and Asn414 together coordinate ADP.

It belongs to the FGGY kinase family. Homotetramer and homodimer (in equilibrium). In terms of processing, the phosphoenolpyruvate-dependent sugar phosphotransferase system (PTS), including enzyme I, and histidine-containing protein (HPr) are required for the phosphorylation, which leads to the activation of the enzyme.

The enzyme catalyses glycerol + ATP = sn-glycerol 3-phosphate + ADP + H(+). It participates in polyol metabolism; glycerol degradation via glycerol kinase pathway; sn-glycerol 3-phosphate from glycerol: step 1/1. Activated by phosphorylation and inhibited by fructose 1,6-bisphosphate (FBP). Functionally, key enzyme in the regulation of glycerol uptake and metabolism. Catalyzes the phosphorylation of glycerol to yield sn-glycerol 3-phosphate. The chain is Glycerol kinase from Staphylococcus haemolyticus (strain JCSC1435).